The sequence spans 419 residues: 2-amino-3-ketobutyrate coenzyme A ligase, mitochondrial (419 aa).

A mitochondrion-targeting transit peptide spans 1–21; that stretch reads MWPGNAWRAALFWVPRGRRAQ. Residue Lys45 is modified to N6-acetyllysine; alternate. The residue at position 45 (Lys45) is an N6-succinyllysine; alternate. Pyridoxal 5'-phosphate is bound at residue 134 to 135; it reads CY. Position 159 (His159) interacts with substrate. Residue Lys187 is modified to N6-acetyllysine; alternate. Residue Lys187 is modified to N6-succinyllysine; alternate. Pyridoxal 5'-phosphate-binding positions include Ser206, 262–265, and 295–296; these read TLGK and SN. Lys265 carries the N6-(pyridoxal phosphate)lysine modification. Lys326 and Lys368 each carry N6-succinyllysine. An N6-acetyllysine; alternate modification is found at Lys383. An N6-succinyllysine; alternate modification is found at Lys383. Arg389 is a substrate binding site.

Belongs to the class-II pyridoxal-phosphate-dependent aminotransferase family. Pyridoxal 5'-phosphate is required as a cofactor. As to expression, strongly expressed in heart, brain, liver and pancreas. Also found in lung.

It localises to the mitochondrion. The protein resides in the nucleus. The catalysed reaction is glycine + acetyl-CoA = (2S)-2-amino-3-oxobutanoate + CoA. Functionally, pyridoxal phosphate (PLP) dependent enzyme, which catalyzes the cleavage of 2-amino-3-oxobutanoate to glycine and acetyl-CoA. This Homo sapiens (Human) protein is 2-amino-3-ketobutyrate coenzyme A ligase, mitochondrial.